The sequence spans 563 residues: Sulfite reductase [NADPH] hemoprotein beta-component (563 aa).

[4Fe-4S] cluster contacts are provided by Cys426, Cys432, Cys472, and Cys476. Cys476 serves as a coordination point for siroheme.

The protein belongs to the nitrite and sulfite reductase 4Fe-4S domain family. Alpha(8)-beta(8). The alpha component is a flavoprotein, the beta component is a hemoprotein. It depends on siroheme as a cofactor. The cofactor is [4Fe-4S] cluster.

It carries out the reaction hydrogen sulfide + 3 NADP(+) + 3 H2O = sulfite + 3 NADPH + 4 H(+). It participates in sulfur metabolism; hydrogen sulfide biosynthesis; hydrogen sulfide from sulfite (NADPH route): step 1/1. Its function is as follows. Component of the sulfite reductase complex that catalyzes the 6-electron reduction of sulfite to sulfide. This is one of several activities required for the biosynthesis of L-cysteine from sulfate. The polypeptide is Sulfite reductase [NADPH] hemoprotein beta-component (Photobacterium profundum (strain SS9)).